The primary structure comprises 333 residues: Neuropeptides B/W receptor type 2 (333 aa).

The Extracellular portion of the chain corresponds to 1–45 (MQAAGHPEPLDSRGSFSLPTMGANVSQDNGTGHNATFSEPLPFLY). Residues Asn24, Asn29, and Asn34 are each glycosylated (N-linked (GlcNAc...) asparagine). Residues 46 to 69 (VLLPAVYSGICAVGLTGNTAVILV) traverse the membrane as a helical segment. The Cytoplasmic segment spans residues 70–80 (ILRAPKMKTVT). Residues 81 to 105 (NVFILNLAVADGLFTLVLPVNIAEH) form a helical membrane-spanning segment. The Extracellular portion of the chain corresponds to 106–120 (LLQYWPFGELLCKLV). Cys117 and Cys197 are disulfide-bonded. A helical membrane pass occupies residues 121 to 140 (LAVDHYNIFSSIYFLAVMSV). The Cytoplasmic segment spans residues 141 to 165 (DRYLVVLATVRSRHMPWRTYRGAKV). The chain crosses the membrane as a helical span at residues 166-185 (ASLCVWLGVTVLVLPFFSFA). Over 186–211 (GVYSNELQVPSCGLSFPWPEQVWFKA) the chain is Extracellular. The helical transmembrane segment at 212-233 (SRVYTLVLGFVLPVCTICVLYT) threads the bilayer. Residues 234-257 (DLLRRLRAVRLRSGAKALGKARRK) lie on the Cytoplasmic side of the membrane. A helical membrane pass occupies residues 258 to 282 (VTVLVLVVLAVCLLCWTPFHLASVV). Topologically, residues 283–292 (ALTTDLPQTP) are extracellular. The helical transmembrane segment at 293-307 (LVISMSYVITSLSYA) threads the bilayer. The Cytoplasmic segment spans residues 308–333 (NSCLNPFLYAFLDDNFRKNFRSILRC).

Belongs to the G-protein coupled receptor 1 family. Detected at high levels in caudate nucleus, hippocampus and amygdala; at moderate levels in the adult brain, thalamus, parietal cortex, pituitary gland, adrenal gland and lymph nodes.

The protein resides in the cell membrane. In terms of biological role, interacts specifically with a number of opioid ligands. Receptor for neuropeptides B and W, which may be involved in neuroendocrine system regulation, food intake and the organization of other signals. In Homo sapiens (Human), this protein is Neuropeptides B/W receptor type 2 (NPBWR2).